The primary structure comprises 432 residues: Putative D-alanyl-D-alanine carboxypeptidase (432 aa).

Residues 7–25 traverse the membrane as a helical; Signal-anchor segment; it reads ATVLLTFSLSAFAVEYPVL.

This sequence belongs to the peptidase S12 family. YfeW subfamily.

The protein localises to the cell inner membrane. The enzyme catalyses Preferential cleavage: (Ac)2-L-Lys-D-Ala-|-D-Ala. Also transpeptidation of peptidyl-alanyl moieties that are N-acyl substituents of D-alanine.. The polypeptide is Putative D-alanyl-D-alanine carboxypeptidase (Salmonella gallinarum (strain 287/91 / NCTC 13346)).